Reading from the N-terminus, the 37-residue chain is Large ribosomal subunit protein bL36 (37 aa).

This sequence belongs to the bacterial ribosomal protein bL36 family.

The chain is Large ribosomal subunit protein bL36 from Alkaliphilus metalliredigens (strain QYMF).